Here is a 738-residue protein sequence, read N- to C-terminus: uncharacterized protein (738 aa).

3 stretches are compositionally biased toward polar residues: residues 1 to 34 (MSSS…QVSS), 140 to 169 (TSSD…QSPP), and 177 to 197 (KPFS…STKD). Disordered stretches follow at residues 1–51 (MSSS…AASI) and 140–197 (TSSD…STKD). The 72-residue stretch at 363–434 (SRLFLGHLNT…QKLHLEISKI (72 aa)) folds into the RRM domain. Positions 466–487 (YPTSSRKRTRSPLMSKGKSYDR) are disordered.

This is an uncharacterized protein from Schizosaccharomyces pombe (strain 972 / ATCC 24843) (Fission yeast).